A 193-amino-acid polypeptide reads, in one-letter code: Cysteine and glycine-rich protein 1 (193 aa).

The LIM zinc-binding 1 domain maps to 10–61 (CGVCQKTVYFAEEVQCEGNSFHKSCFLCMVCKKNLDSTTVAVHGEEIYCKSC). Residues 64–69 (KKYGPK) carry the Nuclear localization signal motif. Ser81 carries the phosphoserine modification. Lys84 is subject to N6-acetyllysine. A Glycyl lysine isopeptide (Lys-Gly) (interchain with G-Cter in SUMO2) cross-link involves residue Lys91. N6-acetyllysine is present on residues Lys112, Lys131, Lys137, and Lys161. The 52-residue stretch at 119-170 (CPRCSQAVYAAEKVIGAGKSWHKSCFRCAKCGKGLESTTLADKDGEIYCKGC) folds into the LIM zinc-binding 2 domain. Phosphoserine is present on Ser192.

As to quaternary structure, interacts with ASCC1; ASCC2 and TRIP4.

The protein localises to the nucleus. Could play a role in neuronal development. The sequence is that of Cysteine and glycine-rich protein 1 (Csrp1) from Rattus norvegicus (Rat).